The sequence spans 90 residues: MTRMVHCIKLDKEAEALDFPPYPGELGKRIYESVSKEAWAAWLKHQTMLVNENRLNLADVRARKYLATQMEKHFFGEGADAAQGYVPPTE.

The protein belongs to the Fe(2+)-trafficking protein family.

Could be a mediator in iron transactions between iron acquisition and iron-requiring processes, such as synthesis and/or repair of Fe-S clusters in biosynthetic enzymes. The chain is Probable Fe(2+)-trafficking protein from Herminiimonas arsenicoxydans.